A 270-amino-acid chain; its full sequence is NAD kinase (270 aa).

The active-site Proton acceptor is the D62. NAD(+)-binding positions include 62–63, R67, 129–130, K140, D159, I167, 170–175, A194, and Q227; these read DG, ND, and TSYSFS.

This sequence belongs to the NAD kinase family. It depends on a divalent metal cation as a cofactor.

The protein localises to the cytoplasm. It carries out the reaction NAD(+) + ATP = ADP + NADP(+) + H(+). Involved in the regulation of the intracellular balance of NAD and NADP, and is a key enzyme in the biosynthesis of NADP. Catalyzes specifically the phosphorylation on 2'-hydroxyl of the adenosine moiety of NAD to yield NADP. This is NAD kinase from Picrophilus torridus (strain ATCC 700027 / DSM 9790 / JCM 10055 / NBRC 100828 / KAW 2/3).